Reading from the N-terminus, the 136-residue chain is Small ribosomal subunit protein eS12 (136 aa).

It belongs to the eukaryotic ribosomal protein eS12 family.

The chain is Small ribosomal subunit protein eS12 (rps12) from Dictyostelium discoideum (Social amoeba).